The following is a 336-amino-acid chain: Peroxidase 11 (336 aa).

Residues 1–20 form the signal peptide; sequence MMRLLFVFFMVHTIFIPCFS. Intrachain disulfides connect Cys-39-Cys-119, Cys-72-Cys-77, Cys-125-Cys-331, and Cys-204-Cys-236. Catalysis depends on His-70, which acts as the Proton acceptor. Asp-71, Val-74, Gly-76, Asp-78, and Ser-80 together coordinate Ca(2+). Pro-167 contacts substrate. His-197 contacts heme b. A Ca(2+)-binding site is contributed by Thr-198. Asn-246 carries N-linked (GlcNAc...) asparagine glycosylation. Ca(2+) is bound by residues Asp-251, Thr-254, and Asp-259.

This sequence belongs to the peroxidase family. Classical plant (class III) peroxidase subfamily. Heme b is required as a cofactor. Requires Ca(2+) as cofactor. In terms of tissue distribution, expressed in roots and stems.

Its subcellular location is the secreted. The catalysed reaction is 2 a phenolic donor + H2O2 = 2 a phenolic radical donor + 2 H2O. Its function is as follows. Removal of H(2)O(2), oxidation of toxic reductants, biosynthesis and degradation of lignin, suberization, auxin catabolism, response to environmental stresses such as wounding, pathogen attack and oxidative stress. These functions might be dependent on each isozyme/isoform in each plant tissue. In Arabidopsis thaliana (Mouse-ear cress), this protein is Peroxidase 11 (PER11).